We begin with the raw amino-acid sequence, 502 residues long: Cytochrome P450 3A5 (502 aa).

Residue Cys441 coordinates heme.

This sequence belongs to the cytochrome P450 family. Requires heme as cofactor.

The protein localises to the endoplasmic reticulum membrane. Its subcellular location is the microsome membrane. The catalysed reaction is an organic molecule + reduced [NADPH--hemoprotein reductase] + O2 = an alcohol + oxidized [NADPH--hemoprotein reductase] + H2O + H(+). It carries out the reaction 17beta-estradiol + reduced [NADPH--hemoprotein reductase] + O2 = 2-hydroxy-17beta-estradiol + oxidized [NADPH--hemoprotein reductase] + H2O + H(+). It catalyses the reaction 17beta-estradiol + reduced [NADPH--hemoprotein reductase] + O2 = 4-hydroxy-17beta-estradiol + oxidized [NADPH--hemoprotein reductase] + H2O + H(+). The enzyme catalyses estrone + reduced [NADPH--hemoprotein reductase] + O2 = 2-hydroxyestrone + oxidized [NADPH--hemoprotein reductase] + H2O + H(+). The catalysed reaction is estrone + reduced [NADPH--hemoprotein reductase] + O2 = 4-hydroxyestrone + oxidized [NADPH--hemoprotein reductase] + H2O + H(+). It carries out the reaction testosterone + reduced [NADPH--hemoprotein reductase] + O2 = 6beta,17beta-dihydroxyandrost-4-en-3-one + oxidized [NADPH--hemoprotein reductase] + H2O + H(+). It catalyses the reaction androst-4-ene-3,17-dione + reduced [NADPH--hemoprotein reductase] + O2 = 6beta-hydroxyandrost-4-ene-3,17-dione + oxidized [NADPH--hemoprotein reductase] + H2O + H(+). The enzyme catalyses progesterone + reduced [NADPH--hemoprotein reductase] + O2 = 6beta-hydroxyprogesterone + oxidized [NADPH--hemoprotein reductase] + H2O + H(+). The catalysed reaction is all-trans-retinol + reduced [NADPH--hemoprotein reductase] + O2 = all-trans-retinal + oxidized [NADPH--hemoprotein reductase] + 2 H2O + H(+). It carries out the reaction all-trans-retinoate + reduced [NADPH--hemoprotein reductase] + O2 = all-trans-4-hydroxyretinoate + oxidized [NADPH--hemoprotein reductase] + H2O + H(+). It participates in steroid hormone biosynthesis. The protein operates within cofactor metabolism; retinol metabolism. In terms of biological role, a cytochrome P450 monooxygenase involved in the metabolism of steroid hormones and vitamins. Mechanistically, uses molecular oxygen inserting one oxygen atom into a substrate, and reducing the second into a water molecule, with two electrons provided by NADPH via cytochrome P450 reductase (NADPH--hemoprotein reductase). Catalyzes the hydroxylation of carbon-hydrogen bonds. Exhibits high catalytic activity for the formation of catechol estrogens from 17beta-estradiol (E2) and estrone (E1), namely 2-hydroxy E1 and E2. Catalyzes 6beta-hydroxylation of the steroid hormones testosterone, progesterone, and androstenedione. Catalyzes the oxidative conversion of all-trans-retinol to all-trans-retinal, a rate-limiting step for the biosynthesis of all-trans-retinoic acid (atRA). Further metabolizes all trans-retinoic acid (atRA) to 4-hydroxyretinoate and may play a role in hepatic atRA clearance. Also involved in the oxidative metabolism of xenobiotics, including calcium channel blocking drug nifedipine and immunosuppressive drug cyclosporine. The polypeptide is Cytochrome P450 3A5 (Homo sapiens (Human)).